Consider the following 399-residue polypeptide: Formate-dependent phosphoribosylglycinamide formyltransferase (399 aa).

Residues 21–22 (EL) and glutamate 81 each bind N(1)-(5-phospho-beta-D-ribosyl)glycinamide. ATP is bound by residues arginine 114, lysine 156, 161–166 (SSGKGQ), 196–199 (EGFI), and glutamate 204. Residues 119 to 314 (RLAAEELGLP…EFELHARAIL (196 aa)) form the ATP-grasp domain. Mg(2+)-binding residues include glutamate 273 and glutamate 285. Residues aspartate 292, lysine 361, and 368-369 (RR) each bind N(1)-(5-phospho-beta-D-ribosyl)glycinamide. A disordered region spans residues 370-399 (MGVAVANGESTDQARERAKLAASKVRPTRT).

This sequence belongs to the PurK/PurT family. As to quaternary structure, homodimer.

The catalysed reaction is N(1)-(5-phospho-beta-D-ribosyl)glycinamide + formate + ATP = N(2)-formyl-N(1)-(5-phospho-beta-D-ribosyl)glycinamide + ADP + phosphate + H(+). The protein operates within purine metabolism; IMP biosynthesis via de novo pathway; N(2)-formyl-N(1)-(5-phospho-D-ribosyl)glycinamide from N(1)-(5-phospho-D-ribosyl)glycinamide (formate route): step 1/1. Functionally, involved in the de novo purine biosynthesis. Catalyzes the transfer of formate to 5-phospho-ribosyl-glycinamide (GAR), producing 5-phospho-ribosyl-N-formylglycinamide (FGAR). Formate is provided by PurU via hydrolysis of 10-formyl-tetrahydrofolate. This chain is Formate-dependent phosphoribosylglycinamide formyltransferase, found in Dechloromonas aromatica (strain RCB).